A 59-amino-acid chain; its full sequence is Large ribosomal subunit protein bL32 (59 aa).

The span at 1-19 (MPVPKRRMSRSNTRSRRAQ) shows a compositional bias: basic residues. The disordered stretch occupies residues 1 to 20 (MPVPKRRMSRSNTRSRRAQW).

The protein belongs to the bacterial ribosomal protein bL32 family.

In Acidothermus cellulolyticus (strain ATCC 43068 / DSM 8971 / 11B), this protein is Large ribosomal subunit protein bL32.